Here is a 602-residue protein sequence, read N- to C-terminus: Sodium- and chloride-dependent GABA transporter 2 (602 aa).

Residues 1–40 (MDNRVSGTTSNGETKPVCPVMEKVEEDGTLEREQWTNKME) lie on the Cytoplasmic side of the membrane. 3 helical membrane-spanning segments follow: residues 41–61 (FVLS…FPYL), 68–88 (GAFF…VFFL), and 121–141 (IVSL…FYLF). The Extracellular portion of the chain corresponds to 142–206 (SSFTTDLPWG…GIQHLGSLRW (65 aa)). Cys-153 and Cys-162 are disulfide-bonded. 3 N-linked (GlcNAc...) asparagine glycosylation sites follow: Asn-169, Asn-173, and Asn-178. 2 consecutive transmembrane segments (helical) span residues 207-227 (ELVL…WKGV) and 233-253 (VVYF…IRGV). An N-linked (GlcNAc...) asparagine glycan is attached at Asn-269. Transmembrane regions (helical) follow at residues 282–302 (AGTQ…ALGS), 319–339 (ILNS…LGFM), 366–386 (VVML…VVLL), 418–438 (ILIL…LTEG), 453–473 (GMCL…VYGA), 490–510 (PLIK…TFLF), and 528–548 (WWGD…IPAW). Over 549–602 (SIYKLRTLKGPLRERLRQLVCPAEDLPQKSQPELTSPATPMTSLLRLTELESNC) the chain is Cytoplasmic. Residue Thr-587 is modified to Phosphothreonine. Ser-591 is subject to Phosphoserine.

This sequence belongs to the sodium:neurotransmitter symporter (SNF) (TC 2.A.22) family. SLC6A13 subfamily. As to expression, brain, retina, and peripheral tissues. Expressed in hepatocytes (at protein level).

Its subcellular location is the cell membrane. It localises to the basolateral cell membrane. It carries out the reaction 4-aminobutanoate(out) + chloride(out) + 2 Na(+)(out) = 4-aminobutanoate(in) + chloride(in) + 2 Na(+)(in). It catalyses the reaction taurine(out) + chloride(out) + 2 Na(+)(out) = taurine(in) + chloride(in) + 2 Na(+)(in). The enzyme catalyses beta-alanine(out) + chloride(out) + 2 Na(+)(out) = beta-alanine(in) + chloride(in) + 2 Na(+)(in). The catalysed reaction is hypotaurine(out) + chloride(out) + 2 Na(+)(out) = hypotaurine(in) + chloride(in) + 2 Na(+)(in). GABA transport is inhibited by beta-alanine, L-2,4-Diaminobutyric acid, hypotaurine and nipecotic acid. Taurine transport is inhibited by hypotaurine, beta-alanine and nipecotic acid. Functionally, mediates sodium- and chloride-dependent transport of gamma-aminobutyric acid (GABA). Mediates transport of taurine and is the major taurine transporter in hepatocytes. Can also mediate transport of beta-alanine and hypotaurine. The protein is Sodium- and chloride-dependent GABA transporter 2 (Slc6a13) of Rattus norvegicus (Rat).